A 207-amino-acid polypeptide reads, in one-letter code: Transcription factor bHLH149 (207 aa).

Positions 1-25 (MVESLFPSIENTGESSRRKKPRISE) are disordered. In terms of domain architecture, bHLH spans 132 to 181 (KSRKGLTETNRIKLPAVERKLKILGRLVPGCRKVSVPNLLDEATDYIAAL).

In terms of assembly, homodimer. Interacts with PRE3.

The protein resides in the nucleus. In terms of biological role, atypical bHLH transcription factor probably unable to bind DNA. Negatively regulates brassinosteroid signaling. This is Transcription factor bHLH149 (BHLH149) from Arabidopsis thaliana (Mouse-ear cress).